The following is a 240-amino-acid chain: Uridylate kinase (240 aa).

13 to 16 (KASG) contacts ATP. An involved in allosteric activation by GTP region spans residues 21–26 (GSQGFG). Residue G55 coordinates UMP. 2 residues coordinate ATP: G56 and R60. Residues D75 and 136-143 (TGNPFFTT) each bind UMP. Residues T163, Q164, Y169, and D172 each contribute to the ATP site.

Belongs to the UMP kinase family. Homohexamer.

It is found in the cytoplasm. The enzyme catalyses UMP + ATP = UDP + ADP. It participates in pyrimidine metabolism; CTP biosynthesis via de novo pathway; UDP from UMP (UMPK route): step 1/1. With respect to regulation, allosterically activated by GTP. Inhibited by UTP. Functionally, catalyzes the reversible phosphorylation of UMP to UDP. The polypeptide is Uridylate kinase (Sinorhizobium medicae (strain WSM419) (Ensifer medicae)).